The following is a 1233-amino-acid chain: NACHT, LRR and PYD domains-containing protein 1b allele 1 (1233 aa).

The segment at M1–D22 is disordered. The NACHT domain maps to Q126–L435. G132 to S139 contributes to the ATP binding site. 2 LRR repeats span residues N627–C647 and S684–C704. Positions F850–F983 are ZU5. Residues F850–Q1133 enclose the FIIND domain. Residues S984–Q1133 form a UPA region. The 84-residue stretch at H1143 to S1226 folds into the CARD domain.

It belongs to the NLRP family. Interacts with DPP9; leading to inhibit activation of the inflammasome. DPP9 acts via formation of a ternary complex, composed of a DPP9 homodimer, one full-length Nlrp1b protein, and one cleaved C-terminus of Nlrp1b (NACHT, LRR and PYD domains-containing protein 1b, C-terminus). Interacts with DPP8; leading to inhibit activation of the inflammasome, probably via formation of a ternary complex with DPP8. Interacts (via LRR repeats) with BCL2 and BCL2L1 (via the loop between motifs BH4 and BH3). Interacts with NOD2; this interaction may increase IL1B release. Interacts with EIF2AK2/PKR; this interaction requires EIF2AK2 activity, is accompanied by EIF2AK2 autophosphorylation and promotes inflammasome assembly in response to B.anthracis lethal toxin. Interacts with MEFV; this interaction targets Nlrp1b to degradation by autophagy, hence preventing excessive IL1B- and IL18-mediated inflammation. In terms of assembly, interacts with the C-terminal part of Nlrp1b (NACHT, LRR and PYD domains-containing protein 1b, C-terminus) in absence of pathogens and other damage-associated signals. As to quaternary structure, interacts with the N-terminal part of Nlrp1b (NACHT, LRR and PYD domains-containing protein 1b, N-terminus) in absence of pathogens and other damage-associated signals. Homomultimer; forms the Nlrp1b inflammasome polymeric complex, a filament composed of homopolymers of this form in response to pathogens and other damage-associated signals. The Nlrp1b inflammasome polymeric complex directly recruits pro-caspase-1 (proCASP1) independently of PYCARD/ASC. Interacts (via CARD domain) with CASP1 (via CARD domain); leading to CASP1 activation. Post-translationally, autocatalytically cleaved. Autocatalytic cleavage in FIIND region occurs constitutively, prior to activation signals, and is required for inflammasome activity (IL1B release), possibly by facilitating CASP1 binding. Both N- and C-terminal parts remain associated non-covalently. In terms of processing, ubiquitinated by UBR2, a component of the N-end rule pathway in response to pathogens and other damage-associated signals, leading to its degradation by the proteasome and subsequent release of the cleaved C-terminal part of the protein (NACHT, LRR and PYD domains-containing protein 1b, C-terminus), which polymerizes and forms the Nlrp1b inflammasome. (Microbial infection) Cleavage by B.anthracis lethal toxin (LT) endopeptidase promotes ubiquitination and degradation of the N-terminal part, releasing the cleaved C-terminal part of the protein (NACHT, LRR and PYD domains-containing protein 1b, C-terminus), which polymerizes and forms the Nlrp1b inflammasome. Post-translationally, (Microbial infection) Ubiquitinated by S.flexneri IpaH7.8, leading to its degradation by the proteasome and subsequent release of the cleaved C-terminal part of the protein (NACHT, LRR and PYD domains-containing protein 1b, C-terminus), which polymerizes and forms the Nlrp1b inflammasome. Widely expressed, including in macrophages.

It is found in the cytoplasm. The protein localises to the cytosol. It localises to the membrane. The protein resides in the inflammasome. Its activity is regulated as follows. Activated by cleavage by B.anthracis lethal toxin (LT) endopeptidase: cleavage by LT promotes ubiquitination and degradation of the N-terminal part, releasing the cleaved C-terminal part of the protein (NACHT, LRR and PYD domains-containing protein 1b, C-terminus), which polymerizes and forms the Nlrp1b inflammasome. Activated by S.flexneri IpaH7.8, an E3 ubiquitin ligase that mediates ubiquitination and degradation of the N-terminal part, releasing the cleaved C-terminal part of the protein, which polymerizes and forms the Nlrp1b inflammasome. Nlrp1b inflammasome is inhibited by DPP8 and DPP9, which sequester the C-terminal fragment of Nlrp1b (NACHT, LRR and PYD domains-containing protein 1b, C-terminus) in a ternary complex, thereby preventing Nlrp1b oligomerization and activation. Nlrp1b inflammasome is activated by Val-boroPro (Talabostat, PT-100), an inhibitor of dipeptidyl peptidases DPP8 and DPP9. Val-boroPro relieves inhibition of DPP8 and/or DPP9 by promoting disruption of the ternary complex, releasing its C-terminal part from autoinhibition. Activated by metabolic inhibitors, such as 2-deoxy-D-glucose and sodium azide, by nutrient deprivation and hypoxia, possibly due to a decrease in cytosolic ATP. Also activated by Toxoplasma gondii. Not activated by muramyl dipeptide, nor by full-length bacterial peptidoglycan. Contrary to its human ortholog, not activated by positive-strand RNA virus such as Semliki Forrest virus or long dsRNA. Its function is as follows. Acts as the sensor component of the Nlrp1b inflammasome, which mediates inflammasome activation in response to various pathogen-associated signals, leading to subsequent pyroptosis. Inflammasomes are supramolecular complexes that assemble in the cytosol in response to pathogens and other damage-associated signals and play critical roles in innate immunity and inflammation. Acts as a recognition receptor (PRR): recognizes specific pathogens and other damage-associated signals, such as B.anthracis lethal toxin (LT) or Val-boroPro inhibitor, and mediates the formation of the inflammasome polymeric complex. In response to pathogen-associated signals, the N-terminal part of Nlrp1b is degraded by the proteasome, releasing the cleaved C-terminal part of the protein (NACHT, LRR and PYD domains-containing protein 1b, C-terminus), which polymerizes to initiate the formation of the inflammasome complex: the inflammasome directly recruits pro-caspase-1 (proCASP1) independently of PYCARD/ASC and promotes caspase-1 (CASP1) activation, which subsequently cleaves and activates inflammatory cytokines IL1B and IL18 and gasdermin-D (GSDMD), leading to pyroptosis. In the absence of GSDMD expression, the Nlrp1b inflammasome is able to recruit and activate CASP8, leading to activation of gasdermin-E (GSDME). Activation of Nlrp1b inflammasome is also required for HMGB1 secretion; the active cytokines and HMGB1 stimulate inflammatory responses. Primary mediator of macrophage susceptibility to B.anthracis LT: in response to B.anthracis infection, macrophages and dendritic cells release IL1B and undergo pyroptosis. This early inflammatory response to the toxin increases resistance to infection by B.anthracis spores. In terms of biological role, constitutes the precursor of the Nlrp1b inflammasome, which mediates autoproteolytic processing within the FIIND domain to generate the N-terminal and C-terminal parts, which are associated non-covalently in absence of pathogens and other damage-associated signals. Regulatory part that prevents formation of the Nlrp1b inflammasome: in absence of pathogens and other damage-associated signals, interacts with the C-terminal part of Nlrp1b (NACHT, LRR and PYD domains-containing protein 1b, C-terminus), preventing activation of the Nlrp1b inflammasome. In response to pathogen-associated signals, this part is ubiquitinated by the N-end rule pathway and degraded by the proteasome, releasing the cleaved C-terminal part of the protein, which polymerizes and forms the Nlrp1b inflammasome. Functionally, constitutes the active part of the Nlrp1b inflammasome. In absence of pathogens and other damage-associated signals, interacts with the N-terminal part of Nlrp1b (NACHT, LRR and PYD domains-containing protein 1b, N-terminus), preventing activation of the Nlrp1b inflammasome. In response to pathogen-associated signals, the N-terminal part of Nlrp1b is degraded by the proteasome, releasing this form, which polymerizes to form the Nlrp1b inflammasome complex: the Nlrp1b inflammasome complex then directly recruits pro-caspase-1 (proCASP1) and promotes caspase-1 (CASP1) activation, leading to gasdermin-D (GSDMD) cleavage and subsequent pyroptosis. This Mus musculus (Mouse) protein is NACHT, LRR and PYD domains-containing protein 1b allele 1.